The sequence spans 227 residues: Translation initiation factor 6 (227 aa).

The protein belongs to the eIF-6 family.

Functionally, binds to the 50S ribosomal subunit and prevents its association with the 30S ribosomal subunit to form the 70S initiation complex. In Pyrococcus horikoshii (strain ATCC 700860 / DSM 12428 / JCM 9974 / NBRC 100139 / OT-3), this protein is Translation initiation factor 6.